A 253-amino-acid chain; its full sequence is BRI3-binding protein (253 aa).

4 helical membrane passes run 19–39, 131–151, 164–181, and 190–210; these read VLLP…PGAQ, ALVL…TLGF, FWLV…YILH, and AVLP…MGYW. Residues 219–253 adopt a coiled-coil conformation; the sequence is SPSVEEKLEHLENQVRLLNIRLNRVLENLDRSKDK. S250 carries the post-translational modification Phosphoserine.

Interacts with LETMD1. Interacts with BRI3. Interacts with BRI3; the interaction is weak. Interacts with TMEM238L.

The protein localises to the mitochondrion outer membrane. Functionally, involved in tumorigenesis and may function by stabilizing p53/TP53. The sequence is that of BRI3-binding protein from Mus musculus (Mouse).